The chain runs to 196 residues: Probable malonic semialdehyde reductase RutE (196 aa).

The protein belongs to the nitroreductase family. HadB/RutE subfamily. The cofactor is FMN.

The enzyme catalyses 3-hydroxypropanoate + NADP(+) = 3-oxopropanoate + NADPH + H(+). May reduce toxic product malonic semialdehyde to 3-hydroxypropionic acid, which is excreted. The chain is Probable malonic semialdehyde reductase RutE from Escherichia coli O139:H28 (strain E24377A / ETEC).